We begin with the raw amino-acid sequence, 311 residues long: Transmembrane protein 177 (311 aa).

Topologically, residues 1-17 (MAGPLWRTAAFVQRHRT) are mitochondrial matrix. A helical membrane pass occupies residues 18–38 (GLLVGSCAGLFGVPISYHLFP). Residues 39-166 (DPVVQWLYQY…EVVYLESSTT (128 aa)) lie on the Mitochondrial intermembrane side of the membrane. A helical transmembrane segment spans residues 167 to 187 (AVHALLAPACLAGTWALGVGA). At 188-197 (KYTLGLHAGP) the chain is on the mitochondrial matrix side. The helical transmembrane segment at 198–218 (MNLRAAFSLVAAVAGFVAYAF) threads the bilayer. Topologically, residues 219-311 (SQDSLTHAVE…WRGMLNPGRS (93 aa)) are mitochondrial intermembrane.

The protein belongs to the TMEM177 family. Found in a complex with COX20, COA6, MT-CO2/COX2, COX18, SCO1 and SCO2. Interacts with COX20. Interacts with COX1, MT-CO2/COX2, SCO1 and SCO2 in a COX20-dependent manner.

It localises to the mitochondrion inner membrane. Functionally, plays a role in the early steps of cytochrome c oxidase subunit II (MT-CO2/COX2) maturation and is required for the stabilization of COX20 and the newly synthesized MT-CO2/COX2 protein. The chain is Transmembrane protein 177 (TMEM177) from Homo sapiens (Human).